The chain runs to 168 residues: MVIAVYPGTFDPFTRGHEDLVRRASNIFDELVVGVAQSPNKRPFFALEERIHIAREVLGHYPNVRVEGFSGLLKDFVRKNNARVIVRGLRAVSDFEYEFQMAGMNRYLLPDVETMFLTPSDQYQFISGTFVREIAQLGGDVSKFVFPSVERWLVEKVGRRHAESDKTA.

Thr9 serves as a coordination point for substrate. ATP contacts are provided by residues 9 to 10 (TF) and His17. Residues Lys41, Leu73, and Arg87 each coordinate substrate. ATP-binding positions include 88–90 (GLR), Glu98, and 123–129 (YQFISGT).

It belongs to the bacterial CoaD family. In terms of assembly, homohexamer. It depends on Mg(2+) as a cofactor.

The protein localises to the cytoplasm. The enzyme catalyses (R)-4'-phosphopantetheine + ATP + H(+) = 3'-dephospho-CoA + diphosphate. The protein operates within cofactor biosynthesis; coenzyme A biosynthesis; CoA from (R)-pantothenate: step 4/5. In terms of biological role, reversibly transfers an adenylyl group from ATP to 4'-phosphopantetheine, yielding dephospho-CoA (dPCoA) and pyrophosphate. The polypeptide is Phosphopantetheine adenylyltransferase (Ralstonia nicotianae (strain ATCC BAA-1114 / GMI1000) (Ralstonia solanacearum)).